Consider the following 340-residue polypeptide: Fructoselysine 6-phosphate deglycase (340 aa).

2 consecutive SIS domains span residues 35 to 169 (IVEE…RLAP) and 201 to 331 (LGEL…PDER).

As to quaternary structure, homododecamer.

The enzyme catalyses N(6)-(6-phospho-D-fructosyl)-L-lysine + H2O = D-glucose 6-phosphate + L-lysine. The protein operates within carbohydrate metabolism; fructoselysine degradation; D-glucose 6-phosphate and lysine from fructoselysine: step 2/2. With respect to regulation, strongly inhibited by ZnCl(2). In terms of biological role, catalyzes the reversible conversion of fructoselysine 6-phosphate to glucose 6-phosphate and lysine. Functions in a fructoselysine degradation pathway that allows E.coli to grow on fructoselysine or psicoselysine. In Escherichia coli (strain K12), this protein is Fructoselysine 6-phosphate deglycase.